A 65-amino-acid chain; its full sequence is Beta-mammal toxin Tpa2 (65 aa).

One can recognise an LCN-type CS-alpha/beta domain in the interval 2 to 64 (KEGYLVGNDG…TWSRATNRCG (63 aa)). 4 disulfides stabilise this stretch: Cys12–Cys63, Cys16–Cys38, Cys24–Cys44, and Cys28–Cys46.

Expressed by the venom gland.

Its subcellular location is the secreted. Beta toxins bind voltage-independently at site-4 of sodium channels (Nav) and shift the voltage of activation toward more negative potentials thereby affecting sodium channel activation and promoting spontaneous and repetitive firing. This toxin is lethal to mice. The sequence is that of Beta-mammal toxin Tpa2 from Tityus pachyurus (Colombian scorpion).